The chain runs to 449 residues: Phosphoglucosamine mutase (449 aa).

Serine 104 serves as the catalytic Phosphoserine intermediate. 4 residues coordinate Mg(2+): serine 104, aspartate 243, aspartate 245, and aspartate 247. Serine 104 is subject to Phosphoserine.

This sequence belongs to the phosphohexose mutase family. Mg(2+) is required as a cofactor. Post-translationally, activated by phosphorylation.

The catalysed reaction is alpha-D-glucosamine 1-phosphate = D-glucosamine 6-phosphate. In terms of biological role, catalyzes the conversion of glucosamine-6-phosphate to glucosamine-1-phosphate. This is Phosphoglucosamine mutase from Xanthomonas oryzae pv. oryzae (strain PXO99A).